We begin with the raw amino-acid sequence, 112 residues long: uncharacterized protein (112 aa).

The chain crosses the membrane as a helical span at residues 85-105 (IVQLIILFAIIITNPNAIELI).

Belongs to the M.jannaschii MJ0023/MJ0349/MJ1072/MJ1074/MJ1107/MJECL16 family.

The protein resides in the membrane. This is an uncharacterized protein from Methanocaldococcus jannaschii (strain ATCC 43067 / DSM 2661 / JAL-1 / JCM 10045 / NBRC 100440) (Methanococcus jannaschii).